The primary structure comprises 135 residues: Proteasome assembly chaperone 3 (135 aa).

The protein belongs to the PSMG3 family.

In terms of biological role, chaperone protein which promotes assembly of the 20S proteasome. May cooperate with psmg1-psmg2 heterodimers to orchestrate the correct assembly of proteasomes. The polypeptide is Proteasome assembly chaperone 3 (psmg3) (Nematostella vectensis (Starlet sea anemone)).